Consider the following 404-residue polypeptide: Iron-sulfur assembly protein IscA2 (404 aa).

Residues K244 to N289 are a coiled coil.

The protein belongs to the HesB/IscA family. As to quaternary structure, dimer. Homotetramer. Interacts with ABCB6.

Its subcellular location is the mitochondrion. Its pathway is cofactor biosynthesis; iron-sulfur cluster biosynthesis. Participates in iron-sulfur cluster formation (ISC) pathway for iron-sulfur (Fe-S) cluster biogenesis. Can bind and transfer [4Fe-4S] clusters to target apo-proteins. In Plasmodium falciparum (isolate 3D7), this protein is Iron-sulfur assembly protein IscA2.